The sequence spans 312 residues: uncharacterized protein (312 aa).

2 stretches are compositionally biased toward basic and acidic residues: residues 1 to 17 (MAKY…EQLE) and 28 to 39 (PDRDGPRHSAKL). A disordered region spans residues 1-39 (MAKYDHLELVRLPEQLERRKHGGGSPPPDRDGPRHSAKL).

This is an uncharacterized protein from Sinorhizobium fredii (strain NBRC 101917 / NGR234).